We begin with the raw amino-acid sequence, 380 residues long: MIPADDYPVTELTKALIARPSVTPLDEGCQTLMAERLSAIGFNIEPMVFEDTTNMWARRGNEGPVFCFAGHTDVVPTGDVSRWHTPPFVPTIIDGYLYGRGAADMKGSLAAMVIATERFVAKHPDHNGSIAFLITSDEEGPFINGTTRVIDTLEARNEKITWALVGEPSSTLKLGDVVKNGRRGSLTGNLIVKGIQGHVAYPHLADNPIHKAAPFLAELSQMHWDNGNEFFPPTSFQIANINGGTGASNVIPGALDVMFNFRYSTEVTAEILIERVEALLKAHELGYDISWIFNGLPFLTGDGPLLDATRIAIRQVTGYETDPQTTGGTSDGRFIAPTGAKVLELGPVNATIHKVNECVKVDDLEQLALCYEVILEQLLC.

H71 lines the Zn(2+) pocket. Residue D73 is part of the active site. Zn(2+) is bound at residue D104. E138 acts as the Proton acceptor in catalysis. 3 residues coordinate Zn(2+): E139, E167, and H353.

It belongs to the peptidase M20A family. DapE subfamily. In terms of assembly, homodimer. Requires Zn(2+) as cofactor. The cofactor is Co(2+).

The enzyme catalyses N-succinyl-(2S,6S)-2,6-diaminopimelate + H2O = (2S,6S)-2,6-diaminopimelate + succinate. The protein operates within amino-acid biosynthesis; L-lysine biosynthesis via DAP pathway; LL-2,6-diaminopimelate from (S)-tetrahydrodipicolinate (succinylase route): step 3/3. Catalyzes the hydrolysis of N-succinyl-L,L-diaminopimelic acid (SDAP), forming succinate and LL-2,6-diaminopimelate (DAP), an intermediate involved in the bacterial biosynthesis of lysine and meso-diaminopimelic acid, an essential component of bacterial cell walls. This is Succinyl-diaminopimelate desuccinylase from Shewanella baltica (strain OS185).